We begin with the raw amino-acid sequence, 155 residues long: 3-dehydroquinate dehydratase 1 (155 aa).

Tyr28 (proton acceptor) is an active-site residue. Substrate is bound by residues Asn80, His86, and Asp93. His106 functions as the Proton donor in the catalytic mechanism. Residues Val107–Thr108 and Arg117 each bind substrate.

Belongs to the type-II 3-dehydroquinase family. As to quaternary structure, homododecamer.

The enzyme catalyses 3-dehydroquinate = 3-dehydroshikimate + H2O. The protein operates within metabolic intermediate biosynthesis; chorismate biosynthesis; chorismate from D-erythrose 4-phosphate and phosphoenolpyruvate: step 3/7. In terms of biological role, catalyzes a trans-dehydration via an enolate intermediate. This chain is 3-dehydroquinate dehydratase 1 (aroQ1), found in Bradyrhizobium diazoefficiens (strain JCM 10833 / BCRC 13528 / IAM 13628 / NBRC 14792 / USDA 110).